The primary structure comprises 532 residues: L-proline--[L-prolyl-carrier protein] ligase (532 aa).

The disordered stretch occupies residues 510 to 532 (KTDYRRLGLDAPPRPAAPLGTAR).

It belongs to the ATP-dependent AMP-binding enzyme family.

The enzyme catalyses holo-[peptidyl-carrier protein] + L-proline + ATP = L-prolyl-[peptidyl-carrier protein] + AMP + diphosphate. Functionally, involved in the biosynthesis of undecylprodigiosin. Catalyzes the conversion of L-proline to L-prolyl-AMP and the transfer of the L-prolyl group to acyl carrier protein RedO. The polypeptide is L-proline--[L-prolyl-carrier protein] ligase (Streptomyces coelicolor (strain ATCC BAA-471 / A3(2) / M145)).